Here is a 76-residue protein sequence, read N- to C-terminus: Cytochrome c oxidase subunit 6C (76 aa).

At 4 to 22 (GALLPKPQMRGLLAKRLRV) the chain is on the mitochondrial matrix side. Residues 23-44 (HIAGAFIVALGVAAAYKFGVAE) form a helical membrane-spanning segment. Residues 45 to 76 (PRKKAYAEFYRNYDSMKDFEEMRKAGIFQSAK) lie on the Mitochondrial intermembrane side of the membrane.

This sequence belongs to the cytochrome c oxidase subunit 6c family. Component of the cytochrome c oxidase (complex IV, CIV), a multisubunit enzyme composed of 14 subunits. The complex is composed of a catalytic core of 3 subunits MT-CO1, MT-CO2 and MT-CO3, encoded in the mitochondrial DNA, and 11 supernumerary subunits COX4I, COX5A, COX5B, COX6A, COX6B, COX6C, COX7A, COX7B, COX7C, COX8 and NDUFA4, which are encoded in the nuclear genome. The complex exists as a monomer or a dimer and forms supercomplexes (SCs) in the inner mitochondrial membrane with NADH-ubiquinone oxidoreductase (complex I, CI) and ubiquinol-cytochrome c oxidoreductase (cytochrome b-c1 complex, complex III, CIII), resulting in different assemblies (supercomplex SCI(1)III(2)IV(1) and megacomplex MCI(2)III(2)IV(2)). Acetylation of Lys-61 is observed in liver mitochondria from fasted mice but not from fed mice.

The protein localises to the mitochondrion inner membrane. It participates in energy metabolism; oxidative phosphorylation. Functionally, component of the cytochrome c oxidase, the last enzyme in the mitochondrial electron transport chain which drives oxidative phosphorylation. The respiratory chain contains 3 multisubunit complexes succinate dehydrogenase (complex II, CII), ubiquinol-cytochrome c oxidoreductase (cytochrome b-c1 complex, complex III, CIII) and cytochrome c oxidase (complex IV, CIV), that cooperate to transfer electrons derived from NADH and succinate to molecular oxygen, creating an electrochemical gradient over the inner membrane that drives transmembrane transport and the ATP synthase. Cytochrome c oxidase is the component of the respiratory chain that catalyzes the reduction of oxygen to water. Electrons originating from reduced cytochrome c in the intermembrane space (IMS) are transferred via the dinuclear copper A center (CU(A)) of subunit 2 and heme A of subunit 1 to the active site in subunit 1, a binuclear center (BNC) formed by heme A3 and copper B (CU(B)). The BNC reduces molecular oxygen to 2 water molecules using 4 electrons from cytochrome c in the IMS and 4 protons from the mitochondrial matrix. This Mus musculus (Mouse) protein is Cytochrome c oxidase subunit 6C (Cox6c).